Here is a 298-residue protein sequence, read N- to C-terminus: MIREPQKSAKAASKSSAPRARSSVAKATSTKATSSKAASSKAAPSKAGADAGAAKPRTKGLGKGVIAVAQPSFRRERALIKRGVWPVAGCDEAGRGPLAGPVVAAAVVLDPKRVPKGLDDSKRLTADRREELFEEICATAQVAVAYASPERINRDNILRASLWALTRAVHALPDLPQHVFVDGRDRLATRCESEAVVGGDGLIASIAAASIIAKVSRDRLMCRLAQECPGYGFESHKGYGVPEHLAALARLGPTVHHRRFFAPVAAAWRKIEGVPAEQTGVTGDLFETPVDAGIAATL.

The segment at 1-57 (MIREPQKSAKAASKSSAPRARSSVAKATSTKATSSKAASSKAAPSKAGADAGAAKPR) is disordered. Residues 8 to 55 (SAKAASKSSAPRARSSVAKATSTKATSSKAASSKAAPSKAGADAGAAK) are compositionally biased toward low complexity. The 189-residue stretch at 85-273 (WPVAGCDEAG…VAAAWRKIEG (189 aa)) folds into the RNase H type-2 domain. The a divalent metal cation site is built by Asp-91, Glu-92, and Asp-182.

This sequence belongs to the RNase HII family. It depends on Mn(2+) as a cofactor. Requires Mg(2+) as cofactor.

The protein resides in the cytoplasm. It catalyses the reaction Endonucleolytic cleavage to 5'-phosphomonoester.. Functionally, endonuclease that specifically degrades the RNA of RNA-DNA hybrids. In Rhodopseudomonas palustris (strain BisB5), this protein is Ribonuclease HII.